We begin with the raw amino-acid sequence, 151 residues long: Deoxyuridine 5'-triphosphate nucleotidohydrolase (151 aa).

Substrate-binding positions include 70-72, asparagine 83, and 87-89; these read RSG and TID.

This sequence belongs to the dUTPase family. The cofactor is Mg(2+).

The catalysed reaction is dUTP + H2O = dUMP + diphosphate + H(+). It participates in pyrimidine metabolism; dUMP biosynthesis; dUMP from dCTP (dUTP route): step 2/2. This enzyme is involved in nucleotide metabolism: it produces dUMP, the immediate precursor of thymidine nucleotides and it decreases the intracellular concentration of dUTP so that uracil cannot be incorporated into DNA. The polypeptide is Deoxyuridine 5'-triphosphate nucleotidohydrolase (Ruegeria pomeroyi (strain ATCC 700808 / DSM 15171 / DSS-3) (Silicibacter pomeroyi)).